Consider the following 361-residue polypeptide: Plasmid recombination enzyme (361 aa).

2 residues coordinate DNA: tyrosine 44 and tyrosine 114. The segment at 331–361 (RAGLKEPSKKAPESSQELDRHKSDELGGPHL) is disordered.

This sequence belongs to the plasmid mobilization pre family.

Its function is as follows. The interaction of the RSA site and the pre protein may not only serve a function in plasmid maintenance, but also contribute to the distribution of small antibiotic resistance plasmids among Gram-positive bacteria. This is Plasmid recombination enzyme (preA) from Lactiplantibacillus plantarum (Lactobacillus plantarum).